The primary structure comprises 247 residues: 1-(5-phosphoribosyl)-5-[(5-phosphoribosylamino)methylideneamino] imidazole-4-carboxamide isomerase (247 aa).

Aspartate 16 (proton acceptor) is an active-site residue. The active-site Proton donor is aspartate 135.

The protein belongs to the HisA/HisF family.

It localises to the cytoplasm. The catalysed reaction is 1-(5-phospho-beta-D-ribosyl)-5-[(5-phospho-beta-D-ribosylamino)methylideneamino]imidazole-4-carboxamide = 5-[(5-phospho-1-deoxy-D-ribulos-1-ylimino)methylamino]-1-(5-phospho-beta-D-ribosyl)imidazole-4-carboxamide. It functions in the pathway amino-acid biosynthesis; L-histidine biosynthesis; L-histidine from 5-phospho-alpha-D-ribose 1-diphosphate: step 4/9. The polypeptide is 1-(5-phosphoribosyl)-5-[(5-phosphoribosylamino)methylideneamino] imidazole-4-carboxamide isomerase (Paenarthrobacter aurescens (strain TC1)).